A 399-amino-acid polypeptide reads, in one-letter code: Succinate--CoA ligase [ADP-forming] subunit beta (399 aa).

Residues 9-254 (KALLREFGVP…ESEEDAKEIE (246 aa)) form the ATP-grasp domain. ATP is bound by residues Lys-46, 53 to 55 (GRG), Glu-109, Ser-112, and Glu-117. Mg(2+) contacts are provided by Asn-209 and Asp-223. Residues Asn-274 and 331-333 (GIM) contribute to the substrate site.

Belongs to the succinate/malate CoA ligase beta subunit family. In terms of assembly, heterotetramer of two alpha and two beta subunits. It depends on Mg(2+) as a cofactor.

The catalysed reaction is succinate + ATP + CoA = succinyl-CoA + ADP + phosphate. It catalyses the reaction GTP + succinate + CoA = succinyl-CoA + GDP + phosphate. Its pathway is carbohydrate metabolism; tricarboxylic acid cycle; succinate from succinyl-CoA (ligase route): step 1/1. Succinyl-CoA synthetase functions in the citric acid cycle (TCA), coupling the hydrolysis of succinyl-CoA to the synthesis of either ATP or GTP and thus represents the only step of substrate-level phosphorylation in the TCA. The beta subunit provides nucleotide specificity of the enzyme and binds the substrate succinate, while the binding sites for coenzyme A and phosphate are found in the alpha subunit. In Nitrobacter winogradskyi (strain ATCC 25391 / DSM 10237 / CIP 104748 / NCIMB 11846 / Nb-255), this protein is Succinate--CoA ligase [ADP-forming] subunit beta.